Here is a 962-residue protein sequence, read N- to C-terminus: Glycine dehydrogenase (decarboxylating) (962 aa).

N6-(pyridoxal phosphate)lysine is present on K709.

Belongs to the GcvP family. In terms of assembly, the glycine cleavage system is composed of four proteins: P, T, L and H. The cofactor is pyridoxal 5'-phosphate.

It carries out the reaction N(6)-[(R)-lipoyl]-L-lysyl-[glycine-cleavage complex H protein] + glycine + H(+) = N(6)-[(R)-S(8)-aminomethyldihydrolipoyl]-L-lysyl-[glycine-cleavage complex H protein] + CO2. Functionally, the glycine cleavage system catalyzes the degradation of glycine. The P protein binds the alpha-amino group of glycine through its pyridoxal phosphate cofactor; CO(2) is released and the remaining methylamine moiety is then transferred to the lipoamide cofactor of the H protein. The protein is Glycine dehydrogenase (decarboxylating) of Shewanella baltica (strain OS223).